Reading from the N-terminus, the 201-residue chain is CMRF35-like molecule 7 (201 aa).

A signal peptide spans 1–17; the sequence is MWLPPALLLLSLSGCFS. The Ig-like V-type domain maps to 18–120; it reads IQGPESVRAP…PDLGTQVKVI (103 aa). Over 18 to 151 the chain is Extracellular; the sequence is IQGPESVRAP…FIGSHKRNHY (134 aa). Cysteine 36 and cysteine 104 are joined by a disulfide. Residues 152–172 traverse the membrane as a helical segment; the sequence is MLLVFVKVPILLILVTAILWL. Over 173 to 201 the chain is Cytoplasmic; sequence KGSQRVPEEPGEQPIYMNFSEPLTKDMAT. Tyrosine 188 bears the Phosphotyrosine; by FYN mark.

It belongs to the CD300 family. In terms of assembly, interacts with TYROBP, which enhances cell surface expression and activation properties. Interacts with GRB2 in the presence of FYN. In terms of processing, phosphorylation on Tyr-188 by FYN is required for interaction with GRB2. Expressed exclusively in myeloid lineages.

It localises to the cell membrane. In terms of biological role, acts as an activating immune receptor through its interaction with ITAM-bearing adapter TYROBP, and also independently by recruitment of GRB2. This chain is CMRF35-like molecule 7 (CD300LB), found in Homo sapiens (Human).